The chain runs to 607 residues: Autophagy-related protein 16-1 (607 aa).

The segment at 13–43 is interaction with ATG5; sequence WKRHISEQLRRRDRLQRQAFEEIILQYNKLL. The stretch at 78–230 forms a coiled coil; it reads NDNQLQEMAQ…QKELAEAAKE (153 aa). A Phosphoserine; by CK2 modification is found at S139. A WIPI2-binding region spans residues 207-230; sequence AENEKDSRRRQARLQKELAEAAKE. The interval 230–242 is RB1CC1-binding; the sequence is EPLPVEQDDDIEV. Residues S269 and S287 each carry the phosphoserine modification. Residues 296–299 carry the Caspase cleavage motif; it reads DNVD. WD repeat units follow at residues 320 to 359, 364 to 403, 406 to 445, 447 to 484, 486 to 525, 532 to 573, and 575 to 607; these read AHDG…CEFK, GSNA…LRHT, GHSG…CIKT, FAGS…IVRE, ELLG…IKQT, KCGS…KVLS, and QHSS…WAQY.

It belongs to the WD repeat ATG16 family. As to quaternary structure, homodimer. Homooligomer. Heterooligomer with ATG16L2. Interacts with WIPI1. Interacts with WIPI2. Interacts with RB1CC1; the interaction is required for ULK1 complex-dependent autophagy. Interacts with ATG5. Part of the minor complex composed of 4 sets of ATG12-ATG5 and ATG16L1 (400 kDa); this complex interacts with ATG3 leading to disruption of ATG7 interaction and promotion of ATG8-like proteins lipidation. Part of the major complex composed of 8 sets of ATG12-ATG5 and ATG16L1 (800 kDa). Interacts with RAB33B (GTP- and GDP-bound forms); the complex consists of a tetramer where two RAB33B molecules bind independently one molecule of the ATG16L1 homodimer; the interaction promotes ATG12-ATG5-ATG16L1 complex recruitment to phagophores. Interacts (via WD repeats) with TMEM59; the interaction mediates unconventional autophagic activity of TMEM59. Interacts with TLR2. Interacts (via WD repeats) with MEFV. Interacts with PPP1CA; the interaction dephosphorylates ATG16L1 causing dissociation of ATG12-ATG5-ATG16L1 complex. Interacts (via N-terminal) with CLTC. Interacts with NOD1. Interacts with NOD2. Interacts with TUFM. Interacts with TRIM16. Interacts (via WD repeats) with SPATA33. Interacts with IRGM. Post-translationally, proteolytic cleavage by activated CASP3 leads to degradation and may regulate autophagy upon cellular stress and apoptotic stimuli. In terms of processing, phosphorylation at Ser-139 promotes association with the ATG12-ATG5 conjugate to form the ATG12-ATG5-ATG16L1 complex.

It is found in the cytoplasm. The protein resides in the preautophagosomal structure membrane. Its subcellular location is the endosome membrane. It localises to the lysosome membrane. Plays an essential role in both canonical and non-canonical autophagy: interacts with ATG12-ATG5 to mediate the lipidation to ATG8 family proteins (MAP1LC3A, MAP1LC3B, MAP1LC3C, GABARAPL1, GABARAPL2 and GABARAP). Acts as a molecular hub, coordinating autophagy pathways via distinct domains that support either canonical or non-canonical signaling. During canonical autophagy, interacts with ATG12-ATG5 to mediate the conjugation of phosphatidylethanolamine (PE) to ATG8 proteins, to produce a membrane-bound activated form of ATG8. Thereby, controls the elongation of the nascent autophagosomal membrane. As part of the ATG8 conjugation system with ATG5 and ATG12, required for recruitment of LRRK2 to stressed lysosomes and induction of LRRK2 kinase activity in response to lysosomal stress. Also involved in non-canonical autophagy, a parallel pathway involving conjugation of ATG8 proteins to single membranes at endolysosomal compartments, probably by catalyzing conjugation of phosphatidylserine (PS) to ATG8. Non-canonical autophagy plays a key role in epithelial cells to limit lethal infection by influenza A (IAV) virus. Regulates mitochondrial antiviral signaling (MAVS)-dependent type I interferon (IFN-I) production. Negatively regulates NOD1- and NOD2-driven inflammatory cytokine response. Instead, promotes an autophagy-dependent antibacterial pathway together with NOD1 or NOD2. Plays a role in regulating morphology and function of Paneth cell. In Homo sapiens (Human), this protein is Autophagy-related protein 16-1.